The sequence spans 536 residues: Putative lipase ATG15 (536 aa).

The Cytoplasmic segment spans residues 1-8 (MGNPTLMR). A helical; Signal-anchor for type II membrane protein membrane pass occupies residues 9–31 (WPVTRILVLGLVVTVLYKAMAIY). The Lumenal segment spans residues 32-536 (SSRRAPVQVC…YCLEYGPELR (505 aa)). N-linked (GlcNAc...) asparagine glycosylation is found at Asn-152, Asn-187, and Asn-293. Ser-309 acts as the Charge relay system in catalysis. N-linked (GlcNAc...) asparagine glycosylation is found at Asn-426 and Asn-516.

It belongs to the AB hydrolase superfamily. Lipase family. In terms of assembly, binds to both phosphatidylinositol (PI) and phosphatidylinositol 3,5-bisphosphate (PIP2).

The protein localises to the endosome. It is found in the multivesicular body membrane. The protein resides in the prevacuolar compartment membrane. The catalysed reaction is a triacylglycerol + H2O = a diacylglycerol + a fatty acid + H(+). In terms of biological role, lipase which is essential for lysis of subvacuolar cytoplasm to vacuole targeted bodies and intravacuolar autophagic bodies. Involved in the lysis of intravacuolar multivesicular body (MVB) vesicles. The intravacuolar membrane disintegration by ATG15 is critical to life span extension. In Pichia angusta (Yeast), this protein is Putative lipase ATG15 (ATG15).